The sequence spans 87 residues: Small ribosomal subunit protein bS20 (87 aa).

The protein belongs to the bacterial ribosomal protein bS20 family.

Functionally, binds directly to 16S ribosomal RNA. The protein is Small ribosomal subunit protein bS20 of Rickettsia bellii (strain OSU 85-389).